The sequence spans 341 residues: HTH-type transcriptional repressor PurR (341 aa).

The HTH lacI-type domain maps to 2 to 56; sequence ATIKDVAKRANVSTTTVSHVINKTRFVAEETRNAVWAAIKELHYSPSAVARSLKV. The H-T-H motif DNA-binding region spans 4–23; sequence IKDVAKRANVSTTTVSHVIN. The DNA-binding element occupies 48–56; sequence SAVARSLKV. Residues Y73, R190, T192, F221, and D275 each contribute to the hypoxanthine site.

As to quaternary structure, homodimer.

The protein operates within purine metabolism; purine nucleotide biosynthesis [regulation]. Is the main repressor of the genes involved in the de novo synthesis of purine nucleotides, regulating purB, purC, purEK, purF, purHD, purL, purMN and guaBA expression. PurR is allosterically activated to bind its cognate DNA by binding the purine corepressors, hypoxanthine or guanine, thereby effecting transcription repression. This is HTH-type transcriptional repressor PurR from Escherichia fergusonii (strain ATCC 35469 / DSM 13698 / CCUG 18766 / IAM 14443 / JCM 21226 / LMG 7866 / NBRC 102419 / NCTC 12128 / CDC 0568-73).